The primary structure comprises 561 residues: Chaperonin GroEL 1 (561 aa).

Residues 29–32 (TMGP), 86–90 (DGTTT), Gly413, and Asp495 each bind ATP.

It belongs to the chaperonin (HSP60) family. In terms of assembly, forms a cylinder of 14 subunits composed of two heptameric rings stacked back-to-back. Interacts with the co-chaperonin GroES.

The protein localises to the cytoplasm. It catalyses the reaction ATP + H2O + a folded polypeptide = ADP + phosphate + an unfolded polypeptide.. In terms of biological role, together with its co-chaperonin GroES, plays an essential role in assisting protein folding. The GroEL-GroES system forms a nano-cage that allows encapsulation of the non-native substrate proteins and provides a physical environment optimized to promote and accelerate protein folding. This is Chaperonin GroEL 1 from Trichodesmium erythraeum (strain IMS101).